Reading from the N-terminus, the 1197-residue chain is DNA-directed RNA polymerase subunit beta (1197 aa).

Over residues 581 to 597 the composition is skewed to polar residues; that stretch reads QANSPLNDDGSFTNPTV. Disordered stretches follow at residues 581 to 603 and 1172 to 1197; these read QANSPLNDDGSFTNPTVTARHGD and EKPDLFKGDDDDTPRIPATKLDEENV.

The protein belongs to the RNA polymerase beta chain family. In terms of assembly, the RNAP catalytic core consists of 2 alpha, 1 beta, 1 beta' and 1 omega subunit. When a sigma factor is associated with the core the holoenzyme is formed, which can initiate transcription.

The enzyme catalyses RNA(n) + a ribonucleoside 5'-triphosphate = RNA(n+1) + diphosphate. Its function is as follows. DNA-dependent RNA polymerase catalyzes the transcription of DNA into RNA using the four ribonucleoside triphosphates as substrates. The sequence is that of DNA-directed RNA polymerase subunit beta from Oenococcus oeni (strain ATCC BAA-331 / PSU-1).